An 807-amino-acid polypeptide reads, in one-letter code: MPTGRFETMREWVYDAISAQRNELLSLFSRYVAQGKGILQSHQLIDEFLKTVKVDGTLEDLNKSPFMKVLQSAEEAIVLPPFVALAIRPRPGVREYVRVNVYELSVDHLTVSEYLRFKEELVNGHANGDYLLELDFEPFNATLPRPTRSSSIGNGVQFLNRHLSSIMFRNKESMEPLLEFLRTHKHDGRPMMLNDRIQNIPILQGALARAEEFLSKLPLATPYSEFEFELQGMGFERGWGDTAQKVSEMVHLLLDILQAPDPSVLETFLGRIPMVFNVVILSPHGYFGQANVLGLPDTGGQVVYILDQVRALENEMLLRIQKQGLEVIPKILIVTRLLPEAKGTTCNQRLERVSGTEHAHILRIPFRTEKGILRKWISRFDVWPYLETFAEDASNEISAELQGVPNLIIGNYSDGNLVASLLASKLGVIQCNIAHALEKTKYPESDIYWRNHEDKYHFSSQFTADLIAMNNADFIITSTYQEIAGSKNNVGQYESHTAFTMPGLYRVVHGIDVFDPKFNIVSPGADMTIYFPYSDKERRLTALHESIEELLFSAEQNDEHVGLLSDQSKPIIFSMARLDRVKNLTGLVECYAKNSKLRELANLVIVGGYIDENQSRDREEMAEIQKMHSLIEQYDLHGEFRWIAAQMNRARNGELYRYIADTKGVFVQPAFYEAFGLTVVESMTCALPTFATCHGGPAEIIENGVSGFHIDPYHPDQVAATLVSFFETCNTNPNHWVKISEGGLKRIYERYTWKKYSERLLTLAGVYAFWKHVSKLERRETRRYLEMFYSLKFRDLANSIPLATDEN.

The segment at 274–752 (MVFNVVILSP…GLKRIYERYT (479 aa)) is GT-B glycosyltransferase.

It belongs to the glycosyltransferase 1 family. Plant sucrose synthase subfamily. As to expression, detected in the whole plant but at lower levels. Predominantly expressed in developing siliques. Also detected in the root tip. Detected in the embryo, endosperm and seed coat (at the protein level).

It localises to the cytoplasm. The protein resides in the plastid membrane. The enzyme catalyses an NDP-alpha-D-glucose + D-fructose = a ribonucleoside 5'-diphosphate + sucrose + H(+). In terms of biological role, sucrose-cleaving enzyme that provides UDP-glucose and fructose for various metabolic pathways. Modulates metabolic homeostasis and directs carbon towards starch synthesis in developing seeds. This chain is Sucrose synthase 2 (SUS2), found in Arabidopsis thaliana (Mouse-ear cress).